The chain runs to 208 residues: Uracil phosphoribosyltransferase (208 aa).

5-phospho-alpha-D-ribose 1-diphosphate-binding positions include arginine 78, arginine 103, and 130 to 138 (DPMLATGGS). Residues isoleucine 193 and 198–200 (GDA) contribute to the uracil site. Aspartate 199 contacts 5-phospho-alpha-D-ribose 1-diphosphate.

This sequence belongs to the UPRTase family. It depends on Mg(2+) as a cofactor.

The enzyme catalyses UMP + diphosphate = 5-phospho-alpha-D-ribose 1-diphosphate + uracil. The protein operates within pyrimidine metabolism; UMP biosynthesis via salvage pathway; UMP from uracil: step 1/1. Allosterically activated by GTP. Its function is as follows. Catalyzes the conversion of uracil and 5-phospho-alpha-D-ribose 1-diphosphate (PRPP) to UMP and diphosphate. In Vibrio parahaemolyticus serotype O3:K6 (strain RIMD 2210633), this protein is Uracil phosphoribosyltransferase.